Consider the following 451-residue polypeptide: Hexokinase (451 aa).

A Hexokinase domain is found at Gln-6–Ala-445. The segment at Asn-63–Val-195 is hexokinase small subdomain. Asp-74–Asn-79 is a binding site for ATP. Residues Ser-144, Thr-161–Lys-162, Asn-196–Asp-197, Thr-222–Asn-223, Glu-249, and Glu-283 contribute to the substrate site. The interval Asn-196–Asp-434 is hexokinase large subdomain. Residues Gly-288–Met-289, Thr-325–Thr-329, and Ser-401–Phe-405 contribute to the ATP site.

Belongs to the hexokinase family. Monomer.

The enzyme catalyses a D-hexose + ATP = a D-hexose 6-phosphate + ADP + H(+). It catalyses the reaction D-mannose + ATP = D-mannose 6-phosphate + ADP + H(+). It carries out the reaction D-fructose + ATP = D-fructose 6-phosphate + ADP + H(+). The catalysed reaction is D-glucose + ATP = D-glucose 6-phosphate + ADP + H(+). It functions in the pathway carbohydrate metabolism; hexose metabolism. The protein operates within carbohydrate degradation; glycolysis; D-glyceraldehyde 3-phosphate and glycerone phosphate from D-glucose: step 1/4. Catalyzes the phosphorylation of various hexoses to hexose 6-phosphate. This Schistosoma mansoni (Blood fluke) protein is Hexokinase.